We begin with the raw amino-acid sequence, 297 residues long: 4-hydroxy-tetrahydrodipicolinate synthase (297 aa).

T55 contributes to the pyruvate binding site. Catalysis depends on Y144, which acts as the Proton donor/acceptor. K172 functions as the Schiff-base intermediate with substrate in the catalytic mechanism. Residue I213 participates in pyruvate binding.

Belongs to the DapA family. Homotetramer; dimer of dimers.

Its subcellular location is the cytoplasm. It carries out the reaction L-aspartate 4-semialdehyde + pyruvate = (2S,4S)-4-hydroxy-2,3,4,5-tetrahydrodipicolinate + H2O + H(+). The protein operates within amino-acid biosynthesis; L-lysine biosynthesis via DAP pathway; (S)-tetrahydrodipicolinate from L-aspartate: step 3/4. Functionally, catalyzes the condensation of (S)-aspartate-beta-semialdehyde [(S)-ASA] and pyruvate to 4-hydroxy-tetrahydrodipicolinate (HTPA). The chain is 4-hydroxy-tetrahydrodipicolinate synthase from Lactococcus lactis subsp. cremoris (strain SK11).